Here is a 231-residue protein sequence, read N- to C-terminus: NADH-ubiquinone oxidoreductase chain 4 (231 aa).

6 consecutive transmembrane segments (helical) span residues 1–21 (PIAGSMVLAAILLKLGGYGII), 34–54 (LFLPFIVLALWGAILANLTCL), 63–85 (IAYSSISHMGLVVAAIIIQTPWG), 89–111 (AMALMIAHGFTSSALFCLANTTY), 128–148 (ILPMTTTWWLMTNLMNIAIPP), and 156–176 (LLIMSALFNWCPATIIMLGLS).

This sequence belongs to the complex I subunit 4 family.

The protein localises to the mitochondrion membrane. It catalyses the reaction a ubiquinone + NADH + 5 H(+)(in) = a ubiquinol + NAD(+) + 4 H(+)(out). In terms of biological role, core subunit of the mitochondrial membrane respiratory chain NADH dehydrogenase (Complex I) that is believed to belong to the minimal assembly required for catalysis. Complex I functions in the transfer of electrons from NADH to the respiratory chain. The immediate electron acceptor for the enzyme is believed to be ubiquinone. The sequence is that of NADH-ubiquinone oxidoreductase chain 4 (MT-ND4) from Crotalus concolor (Midget faded rattlesnake).